The sequence spans 654 residues: Endoplasmic reticulum chaperone BiP (654 aa).

An N-terminal signal peptide occupies residues 1 to 18 (MKLSLVAAMLLLLSAARA). A required for interaction with ELAPOR1 region spans residues 1–80 (MKLSLVAAML…EGERLIGDAA (80 aa)). 36–39 (GTTY) provides a ligand contact to ATP. Serine 86 bears the Phosphoserine mark. Lysine 96 is an ATP binding site. N6-acetyllysine is present on lysine 125. The nucleotide-binding (NBD) stretch occupies residues 125 to 280 (KPYIQVDIGG…KKKTGKDVRK (156 aa)). 3'-nitrotyrosine is present on tyrosine 160. An N6-acetyllysine modification is found at lysine 213. 227–229 (GGT) serves as a coordination point for ATP. N6-acetyllysine is present on lysine 271. 293 to 300 (EKAKRALS) is a binding site for ATP. Residue lysine 326 is modified to N6-acetyllysine. Lysine 352 is covalently cross-linked (Glycyl lysine isopeptide (Lys-Gly) (interchain with G-Cter in SUMO2)). N6-acetyllysine; alternate is present on lysine 353. Residue lysine 353 forms a Glycyl lysine isopeptide (Lys-Gly) (interchain with G-Cter in SUMO1); alternate linkage. Residue 364-367 (GSTR) coordinates ATP. Positions 409 to 419 (QDTGDLVLLDV) are interdomain linker. The segment at 420–500 (CPLTLGIETV…PRGVPQIEVT (81 aa)) is substrate-binding (SBD). Residue lysine 447 is modified to N6-succinyllysine. Arginine 492 is subject to Omega-N-methylarginine. O-AMP-threonine; alternate is present on threonine 518. Threonine 518 bears the Phosphothreonine; alternate mark. At lysine 585 the chain carries N6,N6,N6-trimethyllysine; by METTL21A; in vitro. Residue lysine 585 is modified to N6,N6-dimethyllysine; alternate. Residue lysine 585 is modified to N6-methyllysine; alternate. Lysine 591 carries the N6-methyllysine modification. Residues 633 to 654 (KLYGSAGPPPTGEEDTAEKDEL) are disordered. 2 positions are modified to phosphothreonine: threonine 643 and threonine 648. The span at 644–654 (GEEDTAEKDEL) shows a compositional bias: acidic residues. The short motif at 651-654 (KDEL) is the Prevents secretion from ER element.

The protein belongs to the heat shock protein 70 family. Monomer and homooligomer; homooligomerization via the interdomain linker inactivates the chaperone activity and acts as a storage of HSPA5/BiP molecules. Interacts with DNAJC1 (via J domain). Component of an EIF2 complex at least composed of CELF1/CUGBP1, CALR, CALR3, EIF2S1, EIF2S2, HSP90B1 and HSPA5. Part of a large chaperone multiprotein complex comprising DNAJB11, HSP90B1, HSPA5, HYOU, PDIA2, PDIA4, PDIA6, PPIB, SDF2L1, UGGT1 and very small amounts of ERP29, but not, or at very low levels, CALR nor CANX. Interacts with TMEM132A and TRIM21. May form a complex with ERLEC1, OS9, SEL1L and SYVN1. Interacts with DNAJC10. Interacts with DNAJB9/ERdj4; leading to recruit HSPA5/BiP to ERN1/IRE1. Interacts with ERN1/IRE1 (via luminal domain); the interaction takes place following interaction with DNAJB9/ERdj4 and leads to inactivate ERN1/IRE1, the interaction also competitively inhibits ERN1 interaction with MANF. Interacts directly with MANF (via SAP domain); the interaction inhibits ATP binding to HSPA5/BiP and subsequent nucleotide exchange. Interacts with EIF2AK3/PERK (via luminal domain); interaction leads to inactivate EIF2AK3/PERK. Interacts with MX1. Interacts with METTL23. Interacts with CEMIP; the interaction induces calcium leakage from the endoplasmic reticulum and cell migration. Interacts with PCSK4 form; the interaction takes place in the endoplasmic reticulum. Interacts with CIPC. Interacts with CCDC88B (via C-terminus); the interaction opposes ERN1-mediated JNK activation, protecting against apoptosis. Interacts with INPP5K; necessary for INPP5K localization at the endoplasmic reticulum. Interacts with MANF; the interaction is direct. Interacts with LOXL2; leading to activate the ERN1/IRE1-XBP1 pathway of the unfolded protein response. Interacts with CLU under stressed condition; interaction increases CLU protein stability; facilitates its retrotranslocation and redistribution to the mitochondria; cooperatively suppress stress-induced apoptosis by stabilizing mitochondrial membrane integrity. Interacts with CCDC47. Interacts with CLN3. Interacts with ELAPOR1; may regulate the function of HSPA5 in apoptosis and cell proliferation. Interacts with CASP7. Interacts with ILDR2; the interaction stabilizes ILDR2 expression. Interacts with ADAM7. In terms of assembly, (Microbial infection) Interacts with Japanese encephalitis virus envelope protein E. As to quaternary structure, (Microbial infection) Interacts with R.delemar invasin CotH3 on the surface of nasal epithelial cells. Interacts with R.delemar invasin CotH2. (Microbial infection) Interacts with Zika virus envelope protein E and non-structural protein 1 in a chaperone-client manner. Post-translationally, AMPylated by FICD. In unstressed cells, AMPylation at Thr-518 by FICD inactivates the chaperome activity: AMPylated form is locked in a relatively inert state and only weakly stimulated by J domain-containing proteins. In response to endoplasmic reticulum stress, de-AMPylation by the same protein, FICD, restores the chaperone activity.

It is found in the endoplasmic reticulum lumen. The protein localises to the melanosome. It localises to the cytoplasm. The protein resides in the cell surface. It carries out the reaction ATP + H2O = ADP + phosphate + H(+). The chaperone activity is regulated by ATP-induced allosteric coupling of the nucleotide-binding (NBD) and substrate-binding (SBD) domains. In the ADP-bound and nucleotide-free (apo) states, the two domains have little interaction. In contrast, in the ATP-bound state the two domains are tightly coupled, which results in drastically accelerated kinetics in both binding and release of polypeptide substrates. J domain-containing co-chaperones (DNAJB9/ERdj4 or DNAJC10/ERdj5) stimulate the ATPase activity and are required for efficient substrate recognition by HSPA5/BiP. Homooligomerization inactivates participating HSPA5/BiP protomers and probably act as reservoirs to store HSPA5/BiP molecules when they are not needed by the cell. In terms of biological role, endoplasmic reticulum chaperone that plays a key role in protein folding and quality control in the endoplasmic reticulum lumen. Involved in the correct folding of proteins and degradation of misfolded proteins via its interaction with DNAJC10/ERdj5, probably to facilitate the release of DNAJC10/ERdj5 from its substrate. Acts as a key repressor of the EIF2AK3/PERK and ERN1/IRE1-mediated unfolded protein response (UPR). In the unstressed endoplasmic reticulum, recruited by DNAJB9/ERdj4 to the luminal region of ERN1/IRE1, leading to disrupt the dimerization of ERN1/IRE1, thereby inactivating ERN1/IRE1. Also binds and inactivates EIF2AK3/PERK in unstressed cells. Accumulation of misfolded protein in the endoplasmic reticulum causes release of HSPA5/BiP from ERN1/IRE1 and EIF2AK3/PERK, allowing their homodimerization and subsequent activation. Plays an auxiliary role in post-translational transport of small presecretory proteins across endoplasmic reticulum (ER). May function as an allosteric modulator for SEC61 channel-forming translocon complex, likely cooperating with SEC62 to enable the productive insertion of these precursors into SEC61 channel. Appears to specifically regulate translocation of precursors having inhibitory residues in their mature region that weaken channel gating. May also play a role in apoptosis and cell proliferation. (Microbial infection) Plays an important role in viral binding to the host cell membrane and entry for several flaviruses such as Dengue virus, Zika virus and Japanese encephalitis virus. Acts as a component of the cellular receptor for Dengue virus serotype 2/DENV-2 on human liver cells. Its function is as follows. (Microbial infection) Acts as a receptor for CotH proteins expressed by fungi of the order mucorales, the causative agent of mucormycosis, which plays an important role in epithelial cell invasion by the fungi. Acts as a receptor for R.delemar CotH3 in nasal epithelial cells, which may be an early step in rhinoorbital/cerebral mucormycosis (RCM) disease progression. The chain is Endoplasmic reticulum chaperone BiP from Homo sapiens (Human).